We begin with the raw amino-acid sequence, 171 residues long: Ribosome maturation factor RimP (171 aa).

Belongs to the RimP family.

The protein resides in the cytoplasm. Functionally, required for maturation of 30S ribosomal subunits. The sequence is that of Ribosome maturation factor RimP from Anaeromyxobacter sp. (strain K).